The sequence spans 363 residues: Tetraacyldisaccharide 4'-kinase (363 aa).

62–69 (RVGGTGKT) is a binding site for ATP.

Belongs to the LpxK family.

It catalyses the reaction a lipid A disaccharide + ATP = a lipid IVA + ADP + H(+). It functions in the pathway glycolipid biosynthesis; lipid IV(A) biosynthesis; lipid IV(A) from (3R)-3-hydroxytetradecanoyl-[acyl-carrier-protein] and UDP-N-acetyl-alpha-D-glucosamine: step 6/6. Transfers the gamma-phosphate of ATP to the 4'-position of a tetraacyldisaccharide 1-phosphate intermediate (termed DS-1-P) to form tetraacyldisaccharide 1,4'-bis-phosphate (lipid IVA). The chain is Tetraacyldisaccharide 4'-kinase from Polynucleobacter asymbioticus (strain DSM 18221 / CIP 109841 / QLW-P1DMWA-1) (Polynucleobacter necessarius subsp. asymbioticus).